We begin with the raw amino-acid sequence, 412 residues long: MNYLPQQDPQVFATIEQERKRQHAKIELIASENFVSRAVMEAQGSVMTNKYAEGYPGRRYYGGCEYVDVVEDLARERAKQLFGAEHANVQPHSGAQANMAVYFTVLKPGDTVLGMNLSHGGHLTHGSPVNFSGVQYNFVEYGVDPETHVIDYDDVREKARLHRPKLIVAGASAYPRVIDFAKFREIADEVGAYLMVDMAHIAGLVAAGLHPNPVPYAHFVTTTTHKTLRGPRGGMILCQEQFAKQIDKSIFPGIQGGPLMHVIAAKAVALGEALQDDFKVYAKRIIDNAQRLAAALQKEGFTLVSGGTDNHLLLVDLRPQQLTGKTAEKVLDEVGITVNKNTIPYDPESPFVTSGIRIGTAAVTTRGFGLEEMDEIASLIGLVLKNIDNEQALEEARQRVVALTEKFPLYQD.

Residues Leu117 and Gly121–Leu123 contribute to the (6S)-5,6,7,8-tetrahydrofolate site. Residue Lys226 is modified to N6-(pyridoxal phosphate)lysine. Ser349 to Phe351 provides a ligand contact to (6S)-5,6,7,8-tetrahydrofolate.

This sequence belongs to the SHMT family. Homodimer. Requires pyridoxal 5'-phosphate as cofactor.

The protein resides in the cytoplasm. It catalyses the reaction (6R)-5,10-methylene-5,6,7,8-tetrahydrofolate + glycine + H2O = (6S)-5,6,7,8-tetrahydrofolate + L-serine. It functions in the pathway one-carbon metabolism; tetrahydrofolate interconversion. Its pathway is amino-acid biosynthesis; glycine biosynthesis; glycine from L-serine: step 1/1. Its function is as follows. Catalyzes the reversible interconversion of serine and glycine with tetrahydrofolate (THF) serving as the one-carbon carrier. This reaction serves as the major source of one-carbon groups required for the biosynthesis of purines, thymidylate, methionine, and other important biomolecules. Also exhibits THF-independent aldolase activity toward beta-hydroxyamino acids, producing glycine and aldehydes, via a retro-aldol mechanism. This Geobacillus thermodenitrificans (strain NG80-2) protein is Serine hydroxymethyltransferase.